Reading from the N-terminus, the 27-residue chain is Nucleoside diphosphate kinase 2 (27 aa).

Lysine 3 contacts ATP.

The protein belongs to the NDK family. Requires Mg(2+) as cofactor.

The enzyme catalyses a 2'-deoxyribonucleoside 5'-diphosphate + ATP = a 2'-deoxyribonucleoside 5'-triphosphate + ADP. The catalysed reaction is a ribonucleoside 5'-diphosphate + ATP = a ribonucleoside 5'-triphosphate + ADP. Its function is as follows. Major role in the synthesis of nucleoside triphosphates other than ATP. The ATP gamma phosphate is transferred to the NDP beta phosphate via a ping-pong mechanism, using a phosphorylated active-site intermediate. This is Nucleoside diphosphate kinase 2 from Pseudotsuga menziesii (Douglas-fir).